Reading from the N-terminus, the 192-residue chain is uncharacterized protein (192 aa).

The protein belongs to the CAPAB/TerDEXZ family.

This is an uncharacterized protein from Bacillus subtilis (strain 168).